A 268-amino-acid polypeptide reads, in one-letter code: Receptor expression-enhancing protein 2 (268 aa).

2 helical membrane passes run 1–21 (MVSWIISRMVVLAFGTLYPAY) and 35–55 (YVKWMMYWIVFALFTTAETIT). Residues 170-268 (GDDTHTAATL…TTANNVAESP (99 aa)) are disordered. The segment covering 180 to 196 (PRAKTATRTVRATPVPA) has biased composition (low complexity). Residues 199–216 (ESQHSSRSDDQSDSRTEH) are compositionally biased toward basic and acidic residues. Over residues 228-248 (RIAITRAAKKPAAAKTEQTTK) the composition is skewed to low complexity. Basic residues predominate over residues 249-258 (TVKKAPKKKP).

It belongs to the DP1 family. In terms of assembly, interacts with odorant receptor proteins.

Its subcellular location is the membrane. May enhance the cell surface expression of odorant receptors. The sequence is that of Receptor expression-enhancing protein 2 (reep2) from Danio rerio (Zebrafish).